A 155-amino-acid chain; its full sequence is Keratin-associated protein 4-7 (155 aa).

A run of 20 repeats spans residues Cys-5–Val-9, Cys-24–Ser-28, Cys-29–Thr-33, Cys-34–Thr-38, Cys-44–Ser-48, Cys-49–Gln-53, Cys-54–Val-58, Cys-59–Thr-63, Cys-64–Thr-68, Cys-69–Thr-73, Cys-74–Arg-78, Cys-79–Ser-83, Cys-84–Ser-88, Cys-89–Ser-93, Cys-94–Gln-98, Cys-99–Val-103, Cys-104–Thr-108, Cys-109–Ser-113, Cys-114–Cys-118, and Cys-119–Pro-123. The interval Cys-5–Pro-123 is 20 X 5 AA repeats of C-C-[GIKRQVHEML]-[SPTRV]-[STVQRCP].

Belongs to the KRTAP type 4 family. As to quaternary structure, interacts with hair keratins. As to expression, expressed in the hair follicles.

Functionally, in the hair cortex, hair keratin intermediate filaments are embedded in an interfilamentous matrix, consisting of hair keratin-associated proteins (KRTAP), which are essential for the formation of a rigid and resistant hair shaft through their extensive disulfide bond cross-linking with abundant cysteine residues of hair keratins. The matrix proteins include the high-sulfur and high-glycine-tyrosine keratins. The chain is Keratin-associated protein 4-7 (KRTAP4-7) from Homo sapiens (Human).